Here is a 235-residue protein sequence, read N- to C-terminus: Ribosomal RNA small subunit methyltransferase G (235 aa).

Residues glycine 75, phenylalanine 80, 126-127 (AE), and arginine 145 contribute to the S-adenosyl-L-methionine site.

The protein belongs to the methyltransferase superfamily. RNA methyltransferase RsmG family.

The protein localises to the cytoplasm. In terms of biological role, specifically methylates the N7 position of a guanine in 16S rRNA. The polypeptide is Ribosomal RNA small subunit methyltransferase G (Carboxydothermus hydrogenoformans (strain ATCC BAA-161 / DSM 6008 / Z-2901)).